Consider the following 439-residue polypeptide: Beta-1,3-galactosyl-O-glycosyl-glycoprotein beta-1,6-N-acetylglucosaminyltransferase (439 aa).

Residues M1–R11 lie on the Cytoplasmic side of the membrane. The chain crosses the membrane as a helical; Signal-anchor for type II membrane protein span at residues G12–L29. Residues R30 to L439 lie on the Lumenal side of the membrane. N-linked (GlcNAc...) asparagine; by host glycosylation is found at N71 and N107. 4 disulfide bridges follow: C72-C229, C163-C383, C184-C211, and C392-C424.

This sequence belongs to the glycosyltransferase 14 family.

The protein resides in the host Golgi apparatus membrane. The catalysed reaction is a 3-O-[beta-D-galactosyl-(1-&gt;3)-N-acetyl-alpha-D-galactosaminyl]-L-seryl-[protein] + UDP-N-acetyl-alpha-D-glucosamine = 3-O-{beta-D-galactosyl-(1-&gt;3)-[N-acetyl-beta-D-glucosaminyl-(1-&gt;6)]-N-acetyl-alpha-D-galactosaminyl}-L-seryl-[protein] + UDP + H(+). It catalyses the reaction a 3-O-[beta-D-galactosyl-(1-&gt;3)-N-acetyl-alpha-D-galactosaminyl]-L-threonyl-[protein] + UDP-N-acetyl-alpha-D-glucosamine = a 3-O-{beta-D-galactosyl-(1-&gt;3)-[N-acetyl-beta-D-glucosaminyl-(1-&gt;6)]-N-acetyl-alpha-D-galactosaminyl}-L-threonyl-[protein] + UDP + H(+). The enzyme catalyses a beta-D-Gal-(1-&gt;4)-beta-D-GlcNAc-(1-&gt;3)-beta-D-Gal-(1-&gt;4)-beta-D-GlcNAc derivative + UDP-N-acetyl-alpha-D-glucosamine = a beta-D-Gal-(1-&gt;4)-beta-D-GlcNAc-(1-&gt;3)-[beta-D-GlcNAc-(1-&gt;6)]-beta-D-Gal-(1-&gt;4)-N-acetyl-beta-D-glucosaminyl derivative + UDP + H(+). It carries out the reaction 3-O-[N-acetyl-beta-D-glucosaminyl-(1-&gt;3)-N-acetyl-alpha-D-galactosaminyl]-L-seryl-[protein] + UDP-N-acetyl-alpha-D-glucosamine = 3-O-[N-acetyl-beta-D-glucosaminyl-(1-&gt;3)-[N-acetyl-beta-D-glucosaminyl-(1-&gt;6)]-N-acetyl-alpha-D-galactosaminyl]-L-seryl-[protein] + UDP + H(+). The catalysed reaction is a 3-O-[N-acetyl-beta-D-glucosaminyl-(1-&gt;3)-N-acetyl-alpha-D-galactosaminyl]-L-threonyl-[protein] + UDP-N-acetyl-alpha-D-glucosamine = 3-O-[N-acetyl-beta-D-glucosaminyl-(1-&gt;3)-[N-acetyl-beta-D-glucosaminyl-(1-&gt;6)]-N-acetyl-alpha-D-galactosaminyl]-L-threonyl-[protein] + UDP + H(+). Its pathway is protein modification; protein glycosylation. Its function is as follows. Non-essential glycosyltransferase that can synthesize all known mucin beta 6 N-acetylglucosaminides. Mediates core 2 and core 4 O-glycan branching, 2 important steps in mucin-type biosynthesis. Has also I-branching enzyme activity by converting linear into branched poly-N-acetyllactosaminoglycans. Contributes to the post-translational modifications of structural proteins. In Bovine herpesvirus 4 (BoHV-4), this protein is Beta-1,3-galactosyl-O-glycosyl-glycoprotein beta-1,6-N-acetylglucosaminyltransferase (Bo17).